The sequence spans 662 residues: Pollen receptor-like kinase 1 (662 aa).

The first 31 residues, 1–31 (MPPMQARTLSVYNVMVPLVCLLLFFSTPTHG), serve as a signal peptide directing secretion. The Extracellular portion of the chain corresponds to 32-256 (LSDSEAILKF…ARPKSSSRGP (225 aa)). 6 LRR repeats span residues 79 to 98 (QMEN…SGLT), 99 to 121 (SLRT…KKLA), 122 to 144 (ALKS…AFEG), 147 to 169 (WLKK…VAKL), 171 to 191 (KLLE…EFEH), and 192 to 214 (QLHL…LSMT). N-linked (GlcNAc...) asparagine glycosylation occurs at asparagine 197. Residues 233–253 (ECDSPYIEHPPQSEARPKSSS) form a disordered region. A helical transmembrane segment spans residues 257 to 277 (LVITAIVAALTILIILGVIFL). Residues 278–662 (LNRSYKNKKP…GESCESISFA (385 aa)) lie on the Cytoplasmic side of the membrane. Residues 288–330 (RLAVETGPSSLQKKTGIREADQSRRDRKKADHRKGSGTTKRMG) are disordered. The Protein kinase domain occupies 357–639 (KASAEILGSG…EREGDDDDFY (283 aa)). At serine 359 the chain carries Phosphoserine. Residues 363-371 (LGSGCFGAS) and lysine 385 contribute to the ATP site. The residue at position 437 (serine 437) is a Phosphoserine. The residue at position 457 (threonine 457) is a Phosphothreonine. Tyrosine 527 carries the phosphotyrosine modification. A disordered region spans residues 636–662 (DDFYSTYVSETDGRSSKGESCESISFA). The segment covering 646-655 (TDGRSSKGES) has biased composition (basic and acidic residues).

Belongs to the protein kinase superfamily. Ser/Thr protein kinase family. As to quaternary structure, interacts in vitro with ROPGEF1 (via PRONE domain). Expressed in pollen and/or in flowers, but not in leaves.

The protein resides in the cell membrane. It catalyses the reaction L-seryl-[protein] + ATP = O-phospho-L-seryl-[protein] + ADP + H(+). It carries out the reaction L-threonyl-[protein] + ATP = O-phospho-L-threonyl-[protein] + ADP + H(+). Functionally, receptor-like kinase involved in the control of pollen germination and pollen tube polar growth. In Arabidopsis thaliana (Mouse-ear cress), this protein is Pollen receptor-like kinase 1.